The chain runs to 318 residues: Actin-related protein 2/3 complex subunit 2A (318 aa).

The disordered stretch occupies residues 297 to 318 (RSMNNKSFKRLGLNEVNHTNSK).

It belongs to the ARPC2 family. Component of the Arp2/3 complex composed of ARP2, ARP3, ARPC1/p41-ARC, ARPC2/p34-ARC, ARPC3/p21-ARC, ARPC4/p20-ARC and ARPC5/p16-ARC. Interacts with ARPC4. In terms of tissue distribution, expressed at low levels in all tissues with a relatively highest expression in inflorescences.

It localises to the cytoplasm. The protein resides in the cytoskeleton. The protein localises to the cell projection. Functions as actin-binding component of the Arp2/3 complex which is involved in regulation of actin polymerization and together with an activating nucleation-promoting factor (NPF) mediates the formation of branched actin networks. Seems to contact the mother actin filament. Arp2/3 complex plays a critical role in the control of cell morphogenesis via the modulation of cell polarity development. The polypeptide is Actin-related protein 2/3 complex subunit 2A (ARPC2A) (Arabidopsis thaliana (Mouse-ear cress)).